The following is a 457-amino-acid chain: uncharacterized protein (457 aa).

In terms of domain architecture, TRAM spans 5–63; the sequence is PVEEGQKFPLTIRRMGINGEGIGYFKKAVVFVPGAITGEEVVVEAVKVRDRFTEAKLNK. Positions 76, 82, 85, and 166 each coordinate [4Fe-4S] cluster. Positions 290, 319, 340, and 388 each coordinate S-adenosyl-L-methionine. C415 acts as the Nucleophile in catalysis.

It belongs to the class I-like SAM-binding methyltransferase superfamily. RNA M5U methyltransferase family.

This is an uncharacterized protein from Listeria innocua serovar 6a (strain ATCC BAA-680 / CLIP 11262).